Reading from the N-terminus, the 396-residue chain is 1-deoxy-D-xylulose 5-phosphate reductoisomerase (396 aa).

NADPH contacts are provided by threonine 15, glycine 16, serine 17, isoleucine 18, glycine 41, and asparagine 129. Lysine 130 contacts 1-deoxy-D-xylulose 5-phosphate. Residue glutamate 131 participates in NADPH binding. Residue aspartate 155 coordinates Mn(2+). Residues serine 156, glutamate 157, serine 182, and histidine 205 each coordinate 1-deoxy-D-xylulose 5-phosphate. Glutamate 157 is a binding site for Mn(2+). Glycine 211 is a binding site for NADPH. 1-deoxy-D-xylulose 5-phosphate is bound by residues serine 218, asparagine 223, lysine 224, and glutamate 227. Glutamate 227 provides a ligand contact to Mn(2+).

The protein belongs to the DXR family. It depends on Mg(2+) as a cofactor. Mn(2+) serves as cofactor.

The enzyme catalyses 2-C-methyl-D-erythritol 4-phosphate + NADP(+) = 1-deoxy-D-xylulose 5-phosphate + NADPH + H(+). The protein operates within isoprenoid biosynthesis; isopentenyl diphosphate biosynthesis via DXP pathway; isopentenyl diphosphate from 1-deoxy-D-xylulose 5-phosphate: step 1/6. Its function is as follows. Catalyzes the NADPH-dependent rearrangement and reduction of 1-deoxy-D-xylulose-5-phosphate (DXP) to 2-C-methyl-D-erythritol 4-phosphate (MEP). The protein is 1-deoxy-D-xylulose 5-phosphate reductoisomerase of Xanthomonas euvesicatoria pv. vesicatoria (strain 85-10) (Xanthomonas campestris pv. vesicatoria).